The sequence spans 60 residues: Mastoparan-A (60 aa).

The signal sequence occupies residues M1–A27. 4 AXPX repeats span residues A27–I30, A31–L34, A35–N38, and A41–P43. Residues D28–A45 constitute a propeptide that is removed on maturation. Isoleucine amide is present on I59.

The protein belongs to the MCD family. Mastoparan subfamily. As to expression, expressed by the venom gland.

It is found in the secreted. The protein localises to the target cell membrane. Antimicrobial and mast cell degranulating peptide. Has broad spectrum antibacterial activity against both Gram-positive and Gram-negative bacteria (S.aureus MIC=32-64 ug/ml, S.xylosus MIC=2 ug/ml, S.alactolyticus MIC=12 ug/ml, C.koseri MIC=4 ug/ml, E.coli MIC=8 ug/ml, K.pneumoniae MIC=32 ug/ml, P.aerugiosa MIC=192 ug/ml, S.choleraesuis MIC=32 ug/ml, S.typhimurium MIC=32 ug/ml, V.parahamelytics MIC=16 ug/ml). Affects membrane permeability of E.coli. Shows hemolytic activities on sheep, chicken and human erythrocytes. Its mast cell degranulation activity may be related to the activation of G-protein coupled receptors in mast cells as well as interaction with other proteins located in cell endosomal membranes in the mast cells. The polypeptide is Mastoparan-A (Vespa analis (Yellow-vented hornet)).